The primary structure comprises 490 residues: Betaine aldehyde dehydrogenase (490 aa).

The K(+) site is built by Thr-26, Ile-27, and Asp-93. 150 to 152 is a binding site for NAD(+); the sequence is GAW. The active-site Charge relay system is the Lys-162. Residue 176-179 coordinates NAD(+); it reads KPSE. Val-180 contacts K(+). 230–233 serves as a coordination point for NAD(+); sequence GVAS. Position 246 (Leu-246) interacts with K(+). Glu-252 (proton acceptor) is an active-site residue. NAD(+) is bound by residues Gly-254, Cys-286, and Glu-387. Cys-286 (nucleophile) is an active-site residue. A Cysteine sulfenic acid (-SOH) modification is found at Cys-286. Residues Lys-457 and Gly-460 each contribute to the K(+) site. Glu-464 (charge relay system) is an active-site residue.

It belongs to the aldehyde dehydrogenase family. As to quaternary structure, dimer of dimers. It depends on K(+) as a cofactor.

It catalyses the reaction betaine aldehyde + NAD(+) + H2O = glycine betaine + NADH + 2 H(+). Its pathway is amine and polyamine biosynthesis; betaine biosynthesis via choline pathway; betaine from betaine aldehyde: step 1/1. Its function is as follows. Involved in the biosynthesis of the osmoprotectant glycine betaine. Catalyzes the irreversible oxidation of betaine aldehyde to the corresponding acid. The sequence is that of Betaine aldehyde dehydrogenase from Escherichia coli O45:K1 (strain S88 / ExPEC).